We begin with the raw amino-acid sequence, 354 residues long: Tryptophan--tRNA ligase (354 aa).

Residues 13–15 and 21–22 contribute to the ATP site; these read QPT and GN. A 'HIGH' region motif is present at residues 14–22; the sequence is PTGNLHLGN. D137 contributes to the L-tryptophan binding site. ATP contacts are provided by residues 149 to 151, V208, and 217 to 221; these read GDD and KMSKS. The 'KMSKS' region motif lies at 217 to 221; sequence KMSKS.

It belongs to the class-I aminoacyl-tRNA synthetase family. In terms of assembly, homodimer.

It localises to the cytoplasm. The enzyme catalyses tRNA(Trp) + L-tryptophan + ATP = L-tryptophyl-tRNA(Trp) + AMP + diphosphate + H(+). In terms of biological role, catalyzes the attachment of tryptophan to tRNA(Trp). The sequence is that of Tryptophan--tRNA ligase from Agrobacterium fabrum (strain C58 / ATCC 33970) (Agrobacterium tumefaciens (strain C58)).